Here is a 4128-residue protein sequence, read N- to C-terminus: DNA-dependent protein kinase catalytic subunit (4128 aa).

An N6-acetyllysine modification is found at Lys117. The stretch at 288 to 323 (DNYITLFEVLSKWCSHTNVELKKAAHSALESFLRQI) is one HEAT 1 repeat. 4 positions are modified to phosphoserine: Ser511, Ser686, Ser840, and Ser891. HEAT repeat units lie at residues 1001-1037 (QDTV…LKWS) and 1050-1086 (PVNS…YKEF). Ser1062 is modified (phosphoserine). Lys1206 is subject to N6-acetyllysine. Positions 1501–1536 (LDPSCKSLANGLLELAFGFGGLCDHLVSLLLNSAML) are interaction with C1D. Residues 1501–1536 (LDPSCKSLANGLLELAFGFGGLCDHLVSLLLNSAML) are leucine-zipper. The TPR 1 repeat unit spans residues 1720 to 1753 (PMKSDEFPPDSLKYNNYVDCMKKFLDALELSQSP). Lys1967 carries the post-translational modification N6-acetyllysine. Positions 2049–2071 (YSYSSQDRKPTTGHFQRREHQDS) are disordered. At Ser2053 the chain carries Phosphoserine; by autocatalysis. The segment covering 2054–2070 (QDRKPTTGHFQRREHQD) has biased composition (basic and acidic residues). Residue Lys2255 is modified to N6-acetyllysine. The KIP-binding stretch occupies residues 2432–3213 (LDIVYKMVAK…DHSMSVDEDE (782 aa)). Thr2531 carries the post-translational modification Phosphothreonine. Position 2605 is a phosphothreonine; by autocatalysis (Thr2605). Ser2608 carries the post-translational modification Phosphoserine; by autocatalysis. Residues 2614 to 2635 (TQTQEGPLSDQRQKPGQVRATQ) are disordered. Residues Thr2634 and Thr2643 each carry the phosphothreonine; by autocatalysis modification. A may split the end of the DNA molecule, with the two strands separating around the region region spans residues 2738–2766 (EKLSLLYAKRGLMEQKLEKDIKSEFKMKQ). Residues 2907–3539 (PTKRVRGKTC…IYPFIISSES (633 aa)) enclose the FAT domain. TPR repeat units lie at residues 2921 to 2954 (VLRW…TQDT) and 2956 to 2983 (NALL…LEWV). Phosphoserine is present on Ser3206. N6-acetyllysine is present on residues Lys3241, Lys3260, Lys3638, and Lys3642. A PI3K/PI4K catalytic domain is found at 3722–4053 (FDERVKVMLS…IRYAKRKLAG (332 aa)). The segment at 3728–3734 (VMLSLRK) is G-loop. 2 positions are modified to phosphoserine: Ser3731 and Ser3821. The catalytic loop stretch occupies residues 3919 to 3927 (GIGDRHLNN). The segment at 3939-3964 (GIDFGHAFGSATQFLPVPELMPFRLT) is activation loop. Phosphoserine is present on Ser4026. Residues 4096 to 4128 (SGLSEETQVKCLVDQATDPNILGRTWEGWEPWM) enclose the FATC domain.

It belongs to the PI3/PI4-kinase family. In terms of assembly, DNA-PK is a heterotrimer of PRKDC and the Ku dimer (composed of XRCC6/Ku70 and XRCC5/Ku86). Formation of this complex may be promoted by interaction with ILF3. Component of the core long-range non-homologous end joining (NHEJ) complex (also named DNA-PK complex) composed of PRKDC, LIG4, XRCC4, XRCC6/Ku70, XRCC5/Ku86 and NHEJ1/XLF. Additional component of the NHEJ complex includes PAXX. Following autophosphorylation, PRKDC dissociates from DNA. Interacts with DNA-PKcs-interacting protein (KIP) with the region upstream the kinase domain. PRKDC alone also interacts with and phosphorylates DCLRE1C, thereby activating the latent endonuclease activity of this protein. Interacts with C1D. Interacts with TTI1 and TELO2. Interacts with CIB1. Interacts with SETX. Interacts with NR4A3; the DNA-dependent protein kinase complex DNA-PK phosphorylates and activates NR4A3 and prevents NR4A3 ubiquitination and degradation. Interacts with BRAT1. Part of the HDP-RNP complex composed of at least HEXIM1, PRKDC, XRCC5, XRCC6, paraspeckle proteins (SFPQ, NONO, PSPC1, RBM14, and MATR3) and NEAT1 RNA. Interacts with KAT5. In terms of processing, autophosphorylated at two clusters, the T2609 cluster and the S2056 cluster. Autophosphorylated on Ser-2053, Thr-2605, Thr-2634 and Thr-2643. Ser-2053 and Thr-2605 are DNA damage-inducible phosphorylation sites (inducible with ionizing radiation, IR) dephosphorylated by PPP5C. Autophosphorylation induces a conformational change that leads to remodeling of the DNA-PK complex, requisite for efficient end processing and DNA repair. Autophosphorylation in trans within DNA-PK complexes loaded on DNA ends leads to the dissociation of PRKDC from DNA and the transition into the short-range NHEJ complex. Autophosphorylation of the T2609 cluster is required for hematopoietic development and protein synthesis in erythrocytes precursors. S-nitrosylated by GAPDH. Post-translationally, polyubiquitinated by RNF144A, leading to proteasomal degradation.

It is found in the nucleus. Its subcellular location is the nucleolus. It localises to the cytoplasm. The protein localises to the cytosol. The catalysed reaction is L-seryl-[protein] + ATP = O-phospho-L-seryl-[protein] + ADP + H(+). It carries out the reaction L-threonyl-[protein] + ATP = O-phospho-L-threonyl-[protein] + ADP + H(+). Activity seems to be attenuated by autophosphorylation. Binding to the SL1 region of U3 small nucleolar RNA promotes auto-phosphorylation activity. Inhibited by wortmannin. Functionally, serine/threonine-protein kinase that acts as a molecular sensor for DNA damage. Involved in DNA non-homologous end joining (NHEJ) required for double-strand break (DSB) repair and V(D)J recombination. Must be bound to DNA to express its catalytic properties. Promotes processing of hairpin DNA structures in V(D)J recombination by activation of the hairpin endonuclease artemis (DCLRE1C). Recruited by XRCC5 and XRCC6 to DNA ends and is required to (1) protect and align broken ends of DNA, thereby preventing their degradation, (2) and sequester the DSB for repair by NHEJ. Acts as a scaffold protein to aid the localization of DNA repair proteins to the site of damage. The assembly of the DNA-PK complex at DNA ends is also required for the NHEJ ligation step. Found at the ends of chromosomes, suggesting a further role in the maintenance of telomeric stability and the prevention of chromosomal end fusion. Also involved in modulation of transcription. As part of the DNA-PK complex, involved in the early steps of ribosome assembly by promoting the processing of precursor rRNA into mature 18S rRNA in the small-subunit processome. Binding to U3 small nucleolar RNA, recruits PRKDC and XRCC5/Ku86 to the small-subunit processome. Recognizes the substrate consensus sequence [ST]-Q. Phosphorylates 'Ser-139' of histone variant H2AX, thereby regulating DNA damage response mechanism. Phosphorylates ASF1A, DCLRE1C, c-Abl/ABL1, histone H1, HSPCA, c-jun/JUN, p53/TP53, PARP1, POU2F1, DHX9, FH, SRF, NHEJ1/XLF, XRCC1, XRCC4, XRCC5, XRCC6, WRN, MYC and RFA2. Can phosphorylate C1D not only in the presence of linear DNA but also in the presence of supercoiled DNA. Ability to phosphorylate p53/TP53 in the presence of supercoiled DNA is dependent on C1D. Acts as a regulator of the phosphatidylinositol 3-kinase/protein kinase B signal transduction by mediating phosphorylation of 'Ser-473' of protein kinase B (PKB/AKT1, PKB/AKT2, PKB/AKT3), promoting their activation. Contributes to the determination of the circadian period length by antagonizing phosphorylation of CRY1 'Ser-588' and increasing CRY1 protein stability, most likely through an indirect mechanism. Plays a role in the regulation of DNA virus-mediated innate immune response by assembling into the HDP-RNP complex, a complex that serves as a platform for IRF3 phosphorylation and subsequent innate immune response activation through the cGAS-STING pathway. Also regulates the cGAS-STING pathway by catalyzing phosphorylation of CGAS, thereby impairing CGAS oligomerization and activation. Also regulates the cGAS-STING pathway by mediating phosphorylation of PARP1. The sequence is that of DNA-dependent protein kinase catalytic subunit (Prkdc) from Mus musculus (Mouse).